The following is a 141-amino-acid chain: Drosulfakinins (141 aa).

Residues methionine 1 to alanine 31 form the signal peptide. The propeptide occupies glutamine 32–aspartate 73. The residue at position 82 (phenylalanine 82) is a Phenylalanine amide. The propeptide occupies valine 86 to alanine 111. Sulfotyrosine is present on tyrosine 117. Phenylalanine 122 carries the phenylalanine amide modification. Tyrosine 134 carries the sulfotyrosine modification. A Phenylalanine amide modification is found at phenylalanine 139.

This sequence belongs to the gastrin/cholecystokinin family.

It is found in the secreted. In terms of biological role, drosulfakinin-0 (DSK 0) plays diverse biological roles including regulating gut muscle contraction in adults but not in larvae. In Drosophila simulans (Fruit fly), this protein is Drosulfakinins.